Consider the following 252-residue polypeptide: Pantothenate synthetase (252 aa).

29–36 (MGNLHAGH) is an ATP binding site. H36 (proton donor) is an active-site residue. (R)-pantoate is bound at residue Q60. Position 60 (Q60) interacts with beta-alanine. Residue 146 to 149 (GEKD) participates in ATP binding. (R)-pantoate is bound at residue Q152. Residues V175 and 183–186 (CSSR) contribute to the ATP site.

It belongs to the pantothenate synthetase family. As to quaternary structure, homodimer.

It is found in the cytoplasm. It carries out the reaction (R)-pantoate + beta-alanine + ATP = (R)-pantothenate + AMP + diphosphate + H(+). It participates in cofactor biosynthesis; (R)-pantothenate biosynthesis; (R)-pantothenate from (R)-pantoate and beta-alanine: step 1/1. Functionally, catalyzes the condensation of pantoate with beta-alanine in an ATP-dependent reaction via a pantoyl-adenylate intermediate. This chain is Pantothenate synthetase, found in Legionella pneumophila subsp. pneumophila (strain Philadelphia 1 / ATCC 33152 / DSM 7513).